We begin with the raw amino-acid sequence, 304 residues long: MTVPVITGPTASGKSALAHRLALETGAEILSADSRQVYRELTIGSAKPSREMLREVAYHFINERAITEPFSAGAFALEATARIREIKRRGKRVIVAGGSALYLEGLISPFAELPPQNAEIRRKLSEQLADLGGELLYERLKQLDPEQAETLDPTKTHRLLRSLEIIEITGRTVTELQAKKSGEPSPPSSLHFKTFAIDIPREELYRQINRRTESMMEEGLLIEAEQLWKRYRIEIENKSLPALLTVGYQELFDHFRGRTTLDEAVTLIQQHTRNYAKRQLTFMRNRLTVQWMPADTDWTAHFTG.

8–15 (GPTASGKS) provides a ligand contact to ATP. 10-15 (TASGKS) is a substrate binding site. The segment at 33-36 (DSRQ) is interaction with substrate tRNA.

The protein belongs to the IPP transferase family. In terms of assembly, monomer. It depends on Mg(2+) as a cofactor.

It catalyses the reaction adenosine(37) in tRNA + dimethylallyl diphosphate = N(6)-dimethylallyladenosine(37) in tRNA + diphosphate. Functionally, catalyzes the transfer of a dimethylallyl group onto the adenine at position 37 in tRNAs that read codons beginning with uridine, leading to the formation of N6-(dimethylallyl)adenosine (i(6)A). The sequence is that of tRNA dimethylallyltransferase from Chlorobium luteolum (strain DSM 273 / BCRC 81028 / 2530) (Pelodictyon luteolum).